The primary structure comprises 81 residues: ATP synthase subunit c, chloroplastic (81 aa).

The next 2 membrane-spanning stretches (helical) occupy residues 3–23 and 57–77; these read PIIS…ASIG and LAFM…LLFA.

It belongs to the ATPase C chain family. As to quaternary structure, F-type ATPases have 2 components, F(1) - the catalytic core - and F(0) - the membrane proton channel. F(1) has five subunits: alpha(3), beta(3), gamma(1), delta(1), epsilon(1). F(0) has four main subunits: a(1), b(1), b'(1) and c(10-14). The alpha and beta chains form an alternating ring which encloses part of the gamma chain. F(1) is attached to F(0) by a central stalk formed by the gamma and epsilon chains, while a peripheral stalk is formed by the delta, b and b' chains.

Its subcellular location is the plastid. The protein resides in the chloroplast thylakoid membrane. F(1)F(0) ATP synthase produces ATP from ADP in the presence of a proton or sodium gradient. F-type ATPases consist of two structural domains, F(1) containing the extramembraneous catalytic core and F(0) containing the membrane proton channel, linked together by a central stalk and a peripheral stalk. During catalysis, ATP synthesis in the catalytic domain of F(1) is coupled via a rotary mechanism of the central stalk subunits to proton translocation. In terms of biological role, key component of the F(0) channel; it plays a direct role in translocation across the membrane. A homomeric c-ring of between 10-14 subunits forms the central stalk rotor element with the F(1) delta and epsilon subunits. The chain is ATP synthase subunit c, chloroplastic from Welwitschia mirabilis (Tree tumbo).